A 267-amino-acid polypeptide reads, in one-letter code: MALEFPVIDPIIFSVGPLSVRWYGLMYLIGFAFAMWFANRQAAKPNSGWTKDQVGDFLFYGMLGVILGGRIGYVLFYQFSYFIENPLYLFRIDQGGMSFHGGTLGVITAVVIFAWTRKKSILQVGDFVAPLVPVGLLAGRIGNFINGELWGRVSDVPWAMVFPTGGPLARHPSQLYEAFFEGLVLFLILQWFIKKPRPAGSVAGVFLLGYGTFRFCIEYFRQPDAQLGLFADFISMGQILSLPMIVGGLGLLIWAYKQATQKTAVKG.

3 consecutive transmembrane segments (helical) span residues 18 to 38 (LSVR…MWFA), 57 to 77 (FLFY…VLFY), and 95 to 115 (GGMS…IFAW). Arg140 serves as a coordination point for a 1,2-diacyl-sn-glycero-3-phospho-(1'-sn-glycerol). The next 3 helical transmembrane spans lie at 173 to 193 (SQLY…QWFI), 200 to 220 (GSVA…IEYF), and 233 to 253 (FISM…GLLI).

The protein belongs to the Lgt family.

It is found in the cell inner membrane. It catalyses the reaction L-cysteinyl-[prolipoprotein] + a 1,2-diacyl-sn-glycero-3-phospho-(1'-sn-glycerol) = an S-1,2-diacyl-sn-glyceryl-L-cysteinyl-[prolipoprotein] + sn-glycerol 1-phosphate + H(+). The protein operates within protein modification; lipoprotein biosynthesis (diacylglyceryl transfer). Catalyzes the transfer of the diacylglyceryl group from phosphatidylglycerol to the sulfhydryl group of the N-terminal cysteine of a prolipoprotein, the first step in the formation of mature lipoproteins. The polypeptide is Phosphatidylglycerol--prolipoprotein diacylglyceryl transferase (Pseudoalteromonas translucida (strain TAC 125)).